Reading from the N-terminus, the 320-residue chain is Agamous-like MADS-box protein AGL90 (320 aa).

The 59-residue stretch at 1-59 (MKKVKLSLIANERSRKTSFMKRKNGIFKKLHELSTLCGVQACALIYSPFIPVPESWPSR) folds into the MADS-box domain. The stretch at 80-115 (KMMDQETHLMERITKAKEQLKNLAAENRELQVRRFM) forms a coiled coil.

Interacts with AGL62.

The protein resides in the nucleus. Probable transcription factor. The sequence is that of Agamous-like MADS-box protein AGL90 (AGL90) from Arabidopsis thaliana (Mouse-ear cress).